Reading from the N-terminus, the 211-residue chain is NADH-quinone oxidoreductase subunit I (211 aa).

The tract at residues 21-41 (PTTEQYPEQKKETAPRFHGRH) is disordered. 2 consecutive 4Fe-4S ferredoxin-type domains span residues 43-73 (LNRH…VEGA) and 89-118 (RVYQ…MSND). Cys53, Cys56, Cys59, Cys63, Cys98, Cys101, Cys104, and Cys108 together coordinate [4Fe-4S] cluster. The disordered stretch occupies residues 141–211 (RAGMESPPHP…AHGAGSERPR (71 aa)). Residues 152–166 (RLGESETDYYTRDPD) show a composition bias toward basic and acidic residues. A compositionally biased stretch (acidic residues) spans 179–191 (DEADEAGEAGEAG). The segment covering 192 to 211 (EAERAADKVPAHGAGSERPR) has biased composition (basic and acidic residues).

This sequence belongs to the complex I 23 kDa subunit family. NDH-1 is composed of 14 different subunits. Subunits NuoA, H, J, K, L, M, N constitute the membrane sector of the complex. [4Fe-4S] cluster is required as a cofactor.

It is found in the cell membrane. The enzyme catalyses a quinone + NADH + 5 H(+)(in) = a quinol + NAD(+) + 4 H(+)(out). Its function is as follows. NDH-1 shuttles electrons from NADH, via FMN and iron-sulfur (Fe-S) centers, to quinones in the respiratory chain. The immediate electron acceptor for the enzyme in this species is believed to be ubiquinone. Couples the redox reaction to proton translocation (for every two electrons transferred, four hydrogen ions are translocated across the cytoplasmic membrane), and thus conserves the redox energy in a proton gradient. In Parafrankia sp. (strain EAN1pec), this protein is NADH-quinone oxidoreductase subunit I.